The primary structure comprises 452 residues: Translation initiation factor eIF2B subunit gamma (452 aa).

Methionine 1 carries the post-translational modification N-acetylmethionine. Position 260 is a phosphoserine (serine 260).

It belongs to the eIF-2B gamma/epsilon subunits family. As to quaternary structure, component of the translation initiation factor 2B (eIF2B) complex which is a heterodecamer of two sets of five different subunits: alpha, beta, gamma, delta and epsilon. Subunits alpha, beta and delta comprise a regulatory subcomplex and subunits epsilon and gamma comprise a catalytic subcomplex. Within the complex, the hexameric regulatory complex resides at the center, with the two heterodimeric catalytic subcomplexes bound on opposite sides.

It is found in the cytoplasm. Its subcellular location is the cytosol. With respect to regulation, activated by the chemical integrated stress response (ISR) inhibitor ISRIB which stimulates guanine nucleotide exchange factor activity for both phosphorylated and unphosphorylated eIF2. Its function is as follows. Acts as a component of the translation initiation factor 2B (eIF2B) complex, which catalyzes the exchange of GDP for GTP on the eukaryotic initiation factor 2 (eIF2) complex gamma subunit. Its guanine nucleotide exchange factor activity is repressed when bound to eIF2 complex phosphorylated on the alpha subunit, thereby limiting the amount of methionyl-initiator methionine tRNA available to the ribosome and consequently global translation is repressed. The protein is Translation initiation factor eIF2B subunit gamma (EIF2B3) of Macaca fascicularis (Crab-eating macaque).